The sequence spans 201 residues: RRARYKKEPVSLTLALLLGGLTMGGIAAGVGTGTTALVATQQFQQLQAAIHDDLKEVEKSITNLEKSLTSLSEVVLQNRRGLDLLFLKEGGLCAALKEECCFYADHTGLVRDSMAKLRERLSQRQKLFESQQGWFEGLFNKSPWFTTLISTVMGPLIILLLILLFGPCILNRLVQFIKDRISVVQALVLTQQYHQLKTIGD.

Residues 1 to 148 are Extracellular-facing; sequence RRARYKKEPV…FNKSPWFTTL (148 aa). A fusion peptide region spans residues 10–30; that stretch reads VSLTLALLLGGLTMGGIAAGV. A coiled-coil region spans residues 39-75; it reads ATQQFQQLQAAIHDDLKEVEKSITNLEKSLTSLSEVV. The tract at residues 76-92 is immunosuppression; it reads LQNRRGLDLLFLKEGGL. The CX6CC motif lies at 93–101; that stretch reads CAALKEECC. The chain crosses the membrane as a helical span at residues 149-169; the sequence is ISTVMGPLIILLLILLFGPCI. C168 carries the S-palmitoyl cysteine; by host lipid modification. Over 170–201 the chain is Cytoplasmic; it reads LNRLVQFIKDRISVVQALVLTQQYHQLKTIGD. A YXXL motif; contains endocytosis signal motif is present at residues 193 to 196; it reads YHQL.

As to quaternary structure, the mature envelope protein (Env) consists of a trimer of SU-TM heterodimers attached by a labile interchain disulfide bond. In terms of processing, specific enzymatic cleavages in vivo yield mature proteins. Envelope glycoproteins are synthesized as an inactive precursor that is N-glycosylated and processed likely by host cell furin or by a furin-like protease in the Golgi to yield the mature SU and TM proteins. The cleavage site between SU and TM requires the minimal sequence [KR]-X-[KR]-R. The R-peptide is released from the C-terminus of the cytoplasmic tail of the TM protein upon particle formation as a result of proteolytic cleavage by the viral protease. Cleavage of this peptide is required for TM to become fusogenic. The transmembrane protein is palmitoylated. Post-translationally, the R-peptide is palmitoylated.

The protein resides in the virion membrane. Its subcellular location is the host cell membrane. Functionally, the surface protein (SU) attaches the virus to the host cell by binding to its receptor. This interaction triggers the refolding of the transmembrane protein (TM) and is thought to activate its fusogenic potential by unmasking its fusion peptide. Fusion occurs at the host cell plasma membrane. In terms of biological role, the transmembrane protein (TM) acts as a class I viral fusion protein. Under the current model, the protein has at least 3 conformational states: pre-fusion native state, pre-hairpin intermediate state, and post-fusion hairpin state. During viral and target cell membrane fusion, the coiled coil regions (heptad repeats) assume a trimer-of-hairpins structure, positioning the fusion peptide in close proximity to the C-terminal region of the ectodomain. The formation of this structure appears to drive apposition and subsequent fusion of viral and target cell membranes. Membranes fusion leads to delivery of the nucleocapsid into the cytoplasm. The chain is Envelope glycoprotein (env) from Mus musculus (Mouse).